An 886-amino-acid chain; its full sequence is MKSNTPTEDSTKWMLESVEIDSMGESSSKEPEINLNKNEGGLKKNASRNLGVGSIIRTLSVSNWRKSGNLGSPSTRKSGNLGPPTNAVPKKTGPQRVERTTSSAARGLQSLRFLDRTVTGRERDAWRSIENRFNQFSVDGKLPKEKFGVCIGMGDTMEFAAEVYEALGRRRQIETENGIDKEQLKLFWEDMIKKDLDCRLQIFFDMCDKNGDGKLTEEEVKEVIVLSASANRLGNLKKNAAAYASLIMEELDPDHKGYIEMWQLEILLTGMVTNADTEKMKKSQTLTRAMIPERYRTPMSKYVSVTAELMHENWKKLWVLALWAIINVYLFMWKYEEFMRNPLYNITGRCVCAAKGAAETLKLNMALILVPVCRKTLTILRSTFLNRVVPFDDNINFHKVIAYMIAFQALLHTALHIFCNYPRLSSCSYDVFLTYAGAALGNTQPSYLGLMLTSVSITGVLMIFFMGFSFTLAMHYFRRNIVKLPKPFNVLAGFNAFWYAHHLLVLAYILLIIHGYYLIIEKPWYQKTTWMYLAVPMLFYASERLFSRLLQEHSHRVNVIKAIVYSGNVLALYVTKPPGFKYKSGMYMFVKCPDLSKFEWHPFSITSAPGDDYLSVHIRALGDWTTELRSRFAKTCEPTQAAAKPKPNSLMRMETRAAGVNPHIEESQVLFPKIFIKGPYGAPAQNYQKFDILLLVGLGIGATPFISILKDMLNHLKPGIPRSGQKYEGSVGGESIGGDSVSGGGGKKFPQRAYFFWVTREQASFDWFKGVMDDIAEYDKTHVIEMHNYLTSMYEAGDARSALIAMVQKLQHAKNGVDIVSESRIRTHFARPNWRKVFSELSSKHEACRIGVFYCGSPTLVRPLKELCQEFSLESSTRFTFHKENF.

Disordered stretches follow at residues 1–46 and 64–103; these read MKSN…KKNA and WRKS…TTSS. The Cytoplasmic portion of the chain corresponds to 1 to 316; it reads MKSNTPTEDS…AELMHENWKK (316 aa). The span at 64–78 shows a compositional bias: polar residues; sequence WRKSGNLGSPSTRKS. 2 EF-hand-like regions span residues 137 to 145 and 171 to 183; these read SVDGKLPKE and RQIE…DKEQ. 2 EF-hand domains span residues 195–230 and 239–274; these read DLDC…SASA and NAAA…MVTN. 5 residues coordinate Ca(2+): Asp208, Asn210, Asp212, Lys214, and Glu219. Ser283 bears the Phosphoserine mark. The helical transmembrane segment at 317-337 threads the bilayer; the sequence is LWVLALWAIINVYLFMWKYEE. The Extracellular portion of the chain corresponds to 338–404; sequence FMRNPLYNIT…INFHKVIAYM (67 aa). The Ferric oxidoreductase domain maps to 355–512; that stretch reads KGAAETLKLN…LLVLAYILLI (158 aa). A helical transmembrane segment spans residues 405 to 421; it reads IAFQALLHTALHIFCNY. The Cytoplasmic portion of the chain corresponds to 422 to 456; it reads PRLSSCSYDVFLTYAGAALGNTQPSYLGLMLTSVS. Residues 457–477 form a helical membrane-spanning segment; sequence ITGVLMIFFMGFSFTLAMHYF. Topologically, residues 478–499 are extracellular; the sequence is RRNIVKLPKPFNVLAGFNAFWY. Residues 500-520 form a helical membrane-spanning segment; that stretch reads AHHLLVLAYILLIIHGYYLII. Over 521 to 528 the chain is Cytoplasmic; that stretch reads EKPWYQKT. Residues 529-546 form a helical membrane-spanning segment; it reads TWMYLAVPMLFYASERLF. Over 547 to 688 the chain is Extracellular; the sequence is SRLLQEHSHR…PYGAPAQNYQ (142 aa). The FAD-binding FR-type domain maps to 552–686; sequence EHSHRVNVIK…KGPYGAPAQN (135 aa). The helical transmembrane segment at 689-709 threads the bilayer; it reads KFDILLLVGLGIGATPFISIL. Over 710-886 the chain is Cytoplasmic; the sequence is KDMLNHLKPG…TRFTFHKENF (177 aa).

Belongs to the RBOH (TC 5.B.1.3) family. Monomer and homodimer.

It is found in the membrane. Calcium-dependent NADPH oxidase that generates superoxide. This chain is Putative respiratory burst oxidase homolog protein H (RBOHH), found in Arabidopsis thaliana (Mouse-ear cress).